A 331-amino-acid chain; its full sequence is Adenine deaminase (331 aa).

Residues His-17, His-19, and His-197 each contribute to the Zn(2+) site. The active-site Proton donor is Glu-200. Residue Asp-278 coordinates Zn(2+). Position 279 (Asp-279) interacts with substrate.

The protein belongs to the metallo-dependent hydrolases superfamily. Adenosine and AMP deaminases family. Adenine deaminase type 2 subfamily. It depends on Zn(2+) as a cofactor.

The enzyme catalyses adenine + H2O + H(+) = hypoxanthine + NH4(+). Functionally, catalyzes the hydrolytic deamination of adenine to hypoxanthine. Plays an important role in the purine salvage pathway and in nitrogen catabolism. The sequence is that of Adenine deaminase from Wolinella succinogenes (strain ATCC 29543 / DSM 1740 / CCUG 13145 / JCM 31913 / LMG 7466 / NCTC 11488 / FDC 602W) (Vibrio succinogenes).